A 626-amino-acid polypeptide reads, in one-letter code: MDKLSIEQKIFIRRSDGRVHLAEIIKLEGGDSKLITVEWPEGHTVRGKELPLELVVLMNPHIFDSPRCSGGNAASANQTASISPRSMKQRIATGSLSPVLATAPPRQQTAPPVREDEVVHQAERMRKERERRREAQARTRLDREQGKNEDPGNPNWEVARMIRLQREQMESQRVRSGTTNERINCHQIMVCVRKRPLRRKELADREQDVVSIPSKHTLVVHEPRKHVNLVKFLENHSFRFDYVFDEECSNATVYEFTARPLIKHIFDGGMATCFAYGQTGSGKTYTMGGQFPGRHQSSMDGIYAMAAKDVFSTLKTVPYNKLNLKVYCSFFEIYGTRVFDLLMPGKPQLRVLEDRNQQVQVVGLTQNPVQNTAEVLDLLELGNSVRTSGHTSANSKSSRSHAVFQIVLRSAAGEKLHGKFSLIDLAGNERGADNSSADRQTRLEGSEINKSLLVLKECIRALGRQSSHLPFRGSKLTQVLRDSFIGGKKVKTCMIAMISPCLHSVEHTLNTLRYADRVKELSVESIPSKRMPDANLGSTSMSDIVCQSSTQRLFPCASSTSMPGGGNQAQQHTNTANDLNRSQKPTSKPTYPTSGQQLVQRKGSSQREASMMLTKSLAQFRGRNFP.

Residues 1-183 form a globular region; that stretch reads MDKLSIEQKI…VRSGTTNERI (183 aa). The interval 68–155 is disordered; that stretch reads CSGGNAASAN…GKNEDPGNPN (88 aa). The span at 72–96 shows a compositional bias: polar residues; that stretch reads NAASANQTASISPRSMKQRIATGSL. A compositionally biased stretch (low complexity) spans 101–112; it reads ATAPPRQQTAPP. Residues 113–150 show a composition bias toward basic and acidic residues; that stretch reads VREDEVVHQAERMRKERERRREAQARTRLDREQGKNED. Residues 115-150 are a coiled coil; it reads EDEVVHQAERMRKERERRREAQARTRLDREQGKNED. One can recognise a Kinesin motor domain in the interval 187-521; sequence QIMVCVRKRP…LRYADRVKEL (335 aa). 277–284 serves as a coordination point for ATP; it reads GQTGSGKT. Residues 557 to 608 are disordered; it reads ASSTSMPGGGNQAQQHTNTANDLNRSQKPTSKPTYPTSGQQLVQRKGSSQRE.

Belongs to the TRAFAC class myosin-kinesin ATPase superfamily. Kinesin family. MCAK/KIF2 subfamily.

The protein resides in the chromosome. The protein localises to the centromere. It is found in the kinetochore. It localises to the cytoplasm. Its subcellular location is the cytoskeleton. The protein resides in the spindle pole. Its function is as follows. Required during anaphase to drive sister chromatid separation to actively depolymerize kinetochore microtubules at their kinetochore-associated plus ends, thereby contributing to chromatid mobility through a 'Pac-man' mechanism. This Drosophila melanogaster (Fruit fly) protein is Kinesin-like protein Klp59C (Klp59C).